We begin with the raw amino-acid sequence, 1009 residues long: Rho-type GTPase-activating protein 2 (1009 aa).

2 LIM zinc-binding domains span residues 11–68 and 69–129; these read SLCV…DCSD and KCTN…LLRK. A compositionally biased stretch (basic and acidic residues) spans 143 to 155; the sequence is KEDFPIKLPERSV. Disordered stretches follow at residues 143-228, 358-433, 449-608, 664-709, and 723-780; these read KEDF…RTVS, TKEN…LSRS, TSEM…DATD, TREK…ASPK, and QVGD…DYTP. Over residues 162-196 the composition is skewed to polar residues; that stretch reads TRINGKSDVSTNNTAISKNLVSSNEDQQLTPQVLV. A compositionally biased stretch (basic and acidic residues) spans 212 to 222; sequence DNSKDREETSS. Composition is skewed to polar residues over residues 363-385 and 399-414; these read KSSQ…ITRT and LRLS…QTAD. Over residues 481–491 the composition is skewed to basic residues; it reads NIRKSKAKKNP. Composition is skewed to polar residues over residues 493–510 and 522–553; these read SRGQ…QHGN and QSSL…SSSG. Residues 664–682 are compositionally biased toward basic and acidic residues; it reads TREKDKQSASSRESLEQKE. Polar residues-rich tracts occupy residues 683 to 707 and 728 to 749; these read NIAT…SNAS and ESQQ…QKEI. A Phosphoserine modification is found at serine 763. The region spanning 788–1006 is the Rho-GAP domain; sequence SSLQARCAYE…FILGNYRDIF (219 aa).

Functionally, GTPase-activating protein (GAP) for CDC42 and/or RHO1. The protein is Rho-type GTPase-activating protein 2 (RGA2) of Saccharomyces cerevisiae (strain ATCC 204508 / S288c) (Baker's yeast).